The sequence spans 440 residues: C4-dicarboxylate transport protein (440 aa).

Transmembrane regions (helical) follow at residues 15–35, 46–66, 78–98, 146–166, 190–210, 224–244, 291–311, 332–352, and 354–374; these read VLVAITIGILLGHYYPETGVA, LIKMVIAPIIFCTVVSGIAGM, YALLYFEIVSTIALIIGLVVV, AFANGDILQVLMFSVLFGFAL, IINMIMKLAPIGAFGAMAFTI, LMACFYITCILFVLVVLGGIC, VVGLVIPTGYSFNLDGTSIYL, ITLLLVLLVASKGAAGVTGSG, and IVLAATLSAVGHLPVAGLALI. Positions 419 to 440 are disordered; that stretch reads GGSPLVDTRPTDDLGVAEGPAR.

Belongs to the dicarboxylate/amino acid:cation symporter (DAACS) (TC 2.A.23) family.

It is found in the cell inner membrane. In terms of biological role, responsible for the transport of dicarboxylates such as succinate, fumarate, and malate from the periplasm across the membrane. The chain is C4-dicarboxylate transport protein from Pseudomonas entomophila (strain L48).